A 624-amino-acid polypeptide reads, in one-letter code: DNA mismatch repair protein MutL (624 aa).

The segment covering 340-355 (NKLDTDSHSQSHERGH) has biased composition (basic and acidic residues). Residues 340–415 (NKLDTDSHSQ…RGGATSSYRQ (76 aa)) are disordered. 2 stretches are compositionally biased toward polar residues: residues 372-383 (HQTAPSTKASTE) and 391-415 (SPIS…SYRQ).

The protein belongs to the DNA mismatch repair MutL/HexB family.

Its function is as follows. This protein is involved in the repair of mismatches in DNA. It is required for dam-dependent methyl-directed DNA mismatch repair. May act as a 'molecular matchmaker', a protein that promotes the formation of a stable complex between two or more DNA-binding proteins in an ATP-dependent manner without itself being part of a final effector complex. The protein is DNA mismatch repair protein MutL of Shewanella sediminis (strain HAW-EB3).